The primary structure comprises 828 residues: G-type lectin S-receptor-like serine/threonine-protein kinase At2g19130 (828 aa).

A signal peptide spans 1 to 22 (MVSFLTLTSFFFICFFIHGSSA). In terms of domain architecture, Bulb-type lectin spans 23 to 146 (VDTISGDFTL…GSSLSANVLW (124 aa)). At 23 to 439 (VDTISGDFTL…GASGKSNNKG (417 aa)) the chain is on the extracellular side. N-linked (GlcNAc...) asparagine glycosylation is found at N85, N113, N203, N234, N240, and N255. The region spanning 286 to 322 (PRQQCQVYRYCGSFGICSDKSEPFCRCPQGFRPMSQK) is the EGF-like domain. 4 cysteine pairs are disulfide-bonded: C290–C302, C296–C310, C372–C394, and C376–C382. Residues 341 to 422 (CSRGDINQFF…EGNIFYLRLA (82 aa)) enclose the PAN domain. A helical transmembrane segment spans residues 440 to 460 (LIFGAVLGSLGVIVLVLLVVI). Residues 461 to 828 (LILRYRRRKR…KKMTNDNSSA (368 aa)) lie on the Cytoplasmic side of the membrane. One can recognise a Protein kinase domain in the interval 493-770 (KNFSDKLGGG…QVVQILEGVL (278 aa)). ATP contacts are provided by residues 499–507 (LGGGGFGSV) and K521. A Phosphoserine modification is found at S527. The interval 582–600 (VEEKIVLGWKLRFQIALGT) is caM-binding. Residue D619 is the Proton acceptor of the active site. Phosphothreonine is present on T653. A disordered region spans residues 796–828 (ESSSSSSHNSSQNHKHSSSSSSSKKMTNDNSSA). The span at 797–828 (SSSSSSHNSSQNHKHSSSSSSSKKMTNDNSSA) shows a compositional bias: low complexity. The residue at position 815 (S815) is a Phosphoserine.

It belongs to the protein kinase superfamily. Ser/Thr protein kinase family.

The protein resides in the cell membrane. It carries out the reaction L-seryl-[protein] + ATP = O-phospho-L-seryl-[protein] + ADP + H(+). The enzyme catalyses L-threonyl-[protein] + ATP = O-phospho-L-threonyl-[protein] + ADP + H(+). In Arabidopsis thaliana (Mouse-ear cress), this protein is G-type lectin S-receptor-like serine/threonine-protein kinase At2g19130.